Reading from the N-terminus, the 166-residue chain is Disulfide bond formation protein B (166 aa).

Residues 1-11 (MIALPRNRRPL) lie on the Cytoplasmic side of the membrane. Residues 12–28 (FLAVFAYCAALLAFGLY) traverse the membrane as a helical segment. At 29–46 (LQHYQGIEPCPMCIMQRY) the chain is on the periplasmic side. Cys-38 and Cys-41 are joined by a disulfide. A helical transmembrane segment spans residues 47–63 (AFALVGVIALVAGLHGP). The Cytoplasmic segment spans residues 64-70 (RGAGVRV). The helical transmembrane segment at 71–87 (YGGLLLLTALAGGSVAA) threads the bilayer. The Periplasmic segment spans residues 88–143 (RQTWMQLYPPEIPECGPGLEYMLESFPLTSALPMIFRGAGDCSAIDWTFLGLSLAN). Cys-102 and Cys-129 are disulfide-bonded. A helical transmembrane segment spans residues 144-162 (WSLLNFGAAALLALWLLFG). Residues 163-166 (RRVR) are Cytoplasmic-facing.

The protein belongs to the DsbB family.

It localises to the cell inner membrane. In terms of biological role, required for disulfide bond formation in some periplasmic proteins. Acts by oxidizing the DsbA protein. The polypeptide is Disulfide bond formation protein B (Azoarcus sp. (strain BH72)).